We begin with the raw amino-acid sequence, 316 residues long: Methionyl-tRNA formyltransferase (316 aa).

Residue 117 to 120 participates in (6S)-5,6,7,8-tetrahydrofolate binding; the sequence is SLLP.

This sequence belongs to the Fmt family.

It carries out the reaction L-methionyl-tRNA(fMet) + (6R)-10-formyltetrahydrofolate = N-formyl-L-methionyl-tRNA(fMet) + (6S)-5,6,7,8-tetrahydrofolate + H(+). Functionally, attaches a formyl group to the free amino group of methionyl-tRNA(fMet). The formyl group appears to play a dual role in the initiator identity of N-formylmethionyl-tRNA by promoting its recognition by IF2 and preventing the misappropriation of this tRNA by the elongation apparatus. The polypeptide is Methionyl-tRNA formyltransferase (Janthinobacterium sp. (strain Marseille) (Minibacterium massiliensis)).